Reading from the N-terminus, the 462-residue chain is tRNA modification GTPase MnmE (462 aa).

(6S)-5-formyl-5,6,7,8-tetrahydrofolate contacts are provided by R27, E89, and R128. The 161-residue stretch at 223–383 folds into the TrmE-type G domain; that stretch reads GLKIAIVGRP…LEAAILAAVG (161 aa). GTP is bound by residues 233-238, 252-258, and 277-280; these read NVGKSS, TDLPGRT, and DTAG. Positions 237 and 258 each coordinate Mg(2+). (6S)-5-formyl-5,6,7,8-tetrahydrofolate is bound at residue K462.

Belongs to the TRAFAC class TrmE-Era-EngA-EngB-Septin-like GTPase superfamily. TrmE GTPase family. Homodimer. Heterotetramer of two MnmE and two MnmG subunits. The cofactor is K(+).

The protein localises to the cytoplasm. Functionally, exhibits a very high intrinsic GTPase hydrolysis rate. Involved in the addition of a carboxymethylaminomethyl (cmnm) group at the wobble position (U34) of certain tRNAs, forming tRNA-cmnm(5)s(2)U34. The sequence is that of tRNA modification GTPase MnmE from Synechococcus sp. (strain ATCC 27144 / PCC 6301 / SAUG 1402/1) (Anacystis nidulans).